The chain runs to 298 residues: HTH-type transcriptional regulator ArgP (298 aa).

The 57-residue stretch at 4–60 (LDYRWIEALDSVVSKGSFERAAEQLFISQSAVSQRIKQLEKYLAQPVLIREQPPRPT) folds into the HTH lysR-type domain. The segment at residues 21–40 (FERAAEQLFISQSAVSQRIK) is a DNA-binding region (H-T-H motif).

It belongs to the LysR transcriptional regulatory family. As to quaternary structure, homodimer.

Controls the transcription of genes involved in arginine and lysine metabolism. The sequence is that of HTH-type transcriptional regulator ArgP from Vibrio cholerae serotype O1 (strain ATCC 39315 / El Tor Inaba N16961).